Reading from the N-terminus, the 322-residue chain is Large ribosomal subunit protein uL10 (322 aa).

The tract at residues alanine 294–glutamate 322 is disordered. Residues glutamate 304–glutamate 322 show a composition bias toward acidic residues.

Belongs to the universal ribosomal protein uL10 family. In terms of assembly, P0 forms a pentameric complex by interaction with dimers of P1 and P2. Phosphorylated.

Its function is as follows. Ribosomal protein P0 is the functional equivalent of E.coli protein L10. This chain is Large ribosomal subunit protein uL10, found in Lupinus luteus (European yellow lupine).